The chain runs to 472 residues: POU domain, class 5, transcription factor 1 (472 aa).

Disordered regions lie at residues 127 to 154 (MPSE…YHLT) and 187 to 255 (ISQA…LTTE). The segment covering 220-234 (TAQNIPSAQAQSAPR) has biased composition (polar residues). Over residues 235–245 (SSGSSSGGCSN) the composition is skewed to low complexity. A compositionally biased stretch (acidic residues) spans 246 to 255 (SEEEETLTTE). Residues 249–323 (EETLTTEDLE…LLQRWLNEAE (75 aa)) enclose the POU-specific domain. Positions 343 to 402 (KRKRRTSLEGTVRSALESYFVKCPKPNTLEITHISDDLGLERDVVRVWFCNRRQKGKRLA) form a DNA-binding region, homeobox.

It belongs to the POU transcription factor family. Class-7 subfamily.

Its subcellular location is the nucleus. In terms of biological role, involved in early development of embryos, especially in the process of gastrulation. May play an important role in establishing and specifying rhombomeric segments. Seems to be required to maintain the cells in a highly undifferentiated state. In contrast to POU2, T-POU2 lacks DNA-binding activity because of its incomplete pou domain structure. Overexpression of POU2 does not have any effect on development, whereas overexpression of t-POU2 causes developmental retardation or arrest before gastrulation. The polypeptide is POU domain, class 5, transcription factor 1 (pou5f1) (Danio rerio (Zebrafish)).